Reading from the N-terminus, the 234-residue chain is C2H2-type zinc-finger transcription factor clz7 (234 aa).

Disordered regions lie at residues 45–99 and 118–154; these read RPEG…SRVD and SAQP…NGTA. 2 stretches are compositionally biased toward low complexity: residues 66–77 and 140–154; these read SQSSNTSPTSES and SSGT…NGTA. The C2H2-type 1; degenerate zinc finger occupies 159–184; it reads NRCWDHGCNGKKFLNHSNLVRHRREN. The C2H2-type 2; degenerate zinc-finger motif lies at 191-223; that stretch reads FICPMCGAYFSRSTARNQHLEKKSCNRVRRYSN.

Belongs to the GLI C2H2-type zinc-finger protein family.

The protein resides in the nucleus. Transcription factor that probably regulates the expression of the gene cluster that mediates the biosynthesis of squalestatin S1 (SQS1, also known as zaragozic acid A), a heavily oxidized fungal polyketide that offers potent cholesterol lowering activity by targeting squalene synthase (SS). This chain is C2H2-type zinc-finger transcription factor clz7, found in Cochliobolus lunatus (Filamentous fungus).